Here is a 492-residue protein sequence, read N- to C-terminus: Phytoene desaturase (lycopene-forming) (492 aa).

Residue 5–38 participates in FAD binding; sequence TVIGAGFGGLALAIRLQAAGIPVLLLEQRDKPGG.

Belongs to the carotenoid/retinoid oxidoreductase family. FAD serves as cofactor.

Its subcellular location is the cell membrane. It catalyses the reaction 15-cis-phytoene + 4 A = all-trans-lycopene + 4 AH2. Its pathway is carotenoid biosynthesis; lycopene biosynthesis. Its activity is regulated as follows. Inhibited by NAD and NADP. Its function is as follows. Converts 15-cis-phytoene into all-trans-lycopene via the intermediary of all-trans-phytofluene, all-trans-zeta-carotene and all-trans-neurosporene, by the introduction of four double bonds. In Pantoea ananas (Erwinia uredovora), this protein is Phytoene desaturase (lycopene-forming) (crtI).